Reading from the N-terminus, the 106-residue chain is MGKLTLLLLVLLGWLQYSLWLGKNGIHDYVRVKNDVAMQERNNSKLKARNDQLSAEIDDLTGGQEAIEERSRSELGMIKPGETFYRLIIDKSKENTSRPSTPNNTQ.

At methionine 1–lysine 3 the chain is on the cytoplasmic side. Residues leucine 4–leucine 21 traverse the membrane as a helical segment. Topologically, residues glycine 22 to glutamine 106 are periplasmic. Positions tyrosine 29 to arginine 70 form a coiled coil.

Belongs to the FtsB family. Part of a complex composed of FtsB, FtsL and FtsQ.

The protein localises to the cell inner membrane. Functionally, essential cell division protein. May link together the upstream cell division proteins, which are predominantly cytoplasmic, with the downstream cell division proteins, which are predominantly periplasmic. The chain is Cell division protein FtsB from Photorhabdus laumondii subsp. laumondii (strain DSM 15139 / CIP 105565 / TT01) (Photorhabdus luminescens subsp. laumondii).